We begin with the raw amino-acid sequence, 65 residues long: Small ribosomal subunit protein bS21 (65 aa).

The protein belongs to the bacterial ribosomal protein bS21 family.

This is Small ribosomal subunit protein bS21 from Chlorobium chlorochromatii (strain CaD3).